The following is a 335-amino-acid chain: MATIIYDNETTFDALKDKTIAIMGYGSQGHAHARNLHESGLNVVVGLRKGSSSWAKAESDGLKVMTVEEAAKAADVIMILLPDEKQASVYYSQIEPSLEAGNALVFAHGFNIHYNQIVPPKDVDVFMVAPKGPGHIVRRTYTEGIGVPGLIAVYQDATGKARDLALAYAKGIGATRAGVYETTFREETETDLFGEQVDLCGGLSALIKTAFEVLVEAGYQPEMAYFETCHEVKLIVDLIYEGGLERMWHSVSNTAEYGGMTVGPRIINEESREAMYEALARIQNGEFAKEFVLEGMVNHPVLKAMERQEKEHPLEVVGKEIRANIPWLNKKIDDD.

The region spanning 1–182 (MATIIYDNET…GATRAGVYET (182 aa)) is the KARI N-terminal Rossmann domain. Residues 25 to 28 (YGSQ), R48, S51, S53, and 83 to 86 (DEKQ) each bind NADP(+). H108 is a catalytic residue. Residue G134 participates in NADP(+) binding. Residues 183-328 (TFREETETDL…KEIRANIPWL (146 aa)) form the KARI C-terminal knotted domain. D191, E195, E227, and E231 together coordinate Mg(2+). Residue S252 coordinates substrate.

It belongs to the ketol-acid reductoisomerase family. It depends on Mg(2+) as a cofactor.

The enzyme catalyses (2R)-2,3-dihydroxy-3-methylbutanoate + NADP(+) = (2S)-2-acetolactate + NADPH + H(+). The catalysed reaction is (2R,3R)-2,3-dihydroxy-3-methylpentanoate + NADP(+) = (S)-2-ethyl-2-hydroxy-3-oxobutanoate + NADPH + H(+). It participates in amino-acid biosynthesis; L-isoleucine biosynthesis; L-isoleucine from 2-oxobutanoate: step 2/4. The protein operates within amino-acid biosynthesis; L-valine biosynthesis; L-valine from pyruvate: step 2/4. Functionally, involved in the biosynthesis of branched-chain amino acids (BCAA). Catalyzes an alkyl-migration followed by a ketol-acid reduction of (S)-2-acetolactate (S2AL) to yield (R)-2,3-dihydroxy-isovalerate. In the isomerase reaction, S2AL is rearranged via a Mg-dependent methyl migration to produce 3-hydroxy-3-methyl-2-ketobutyrate (HMKB). In the reductase reaction, this 2-ketoacid undergoes a metal-dependent reduction by NADPH to yield (R)-2,3-dihydroxy-isovalerate. This chain is Ketol-acid reductoisomerase (NADP(+)), found in Methanosarcina acetivorans (strain ATCC 35395 / DSM 2834 / JCM 12185 / C2A).